Consider the following 393-residue polypeptide: S-adenosylmethionine synthase 3 (393 aa).

E9 lines the Mg(2+) pocket. H15 contacts ATP. A K(+)-binding site is contributed by E43. Positions 56 and 99 each coordinate L-methionine. Residues 167 to 169, 235 to 238, D246, 252 to 253, A269, K273, and K277 contribute to the ATP site; these read DGK, SGRF, and RK. D246 serves as a coordination point for L-methionine. K277 provides a ligand contact to L-methionine.

This sequence belongs to the AdoMet synthase family. In terms of assembly, homotetramer. It depends on Mn(2+) as a cofactor. The cofactor is Mg(2+). Requires Co(2+) as cofactor. K(+) is required as a cofactor.

Its subcellular location is the cytoplasm. It carries out the reaction L-methionine + ATP + H2O = S-adenosyl-L-methionine + phosphate + diphosphate. Its pathway is amino-acid biosynthesis; S-adenosyl-L-methionine biosynthesis; S-adenosyl-L-methionine from L-methionine: step 1/1. In terms of biological role, catalyzes the formation of S-adenosylmethionine from methionine and ATP. The reaction comprises two steps that are both catalyzed by the same enzyme: formation of S-adenosylmethionine (AdoMet) and triphosphate, and subsequent hydrolysis of the triphosphate. The polypeptide is S-adenosylmethionine synthase 3 (SAM3) (Petunia hybrida (Petunia)).